The sequence spans 80 residues: Conotoxin ArMKLT2-0321 (80 aa).

A signal peptide spans methionine 1 to threonine 21. The propeptide occupies alanine 22–arginine 48. 3 disulfides stabilise this stretch: cysteine 50–cysteine 63, cysteine 57–cysteine 68, and cysteine 62–cysteine 77.

This sequence belongs to the conotoxin O1 superfamily. In terms of tissue distribution, expressed by the venom duct.

The protein localises to the secreted. The protein is Conotoxin ArMKLT2-0321 of Conus arenatus (Sand-dusted cone).